The sequence spans 543 residues: Dipeptide-binding protein DppE (543 aa).

A signal peptide spans 1 to 22 (MKRVKKLWGMGLALGLSFALMG). A lipid anchor (N-palmitoyl cysteine) is attached at cysteine 23. A lipid anchor (S-diacylglycerol cysteine) is attached at cysteine 23.

It belongs to the bacterial solute-binding protein 5 family.

Its subcellular location is the cell membrane. Its function is as follows. Probably part of the ABC transporter DppBCDE involved in dipeptide transport. In Bacillus subtilis (strain 168), this protein is Dipeptide-binding protein DppE (dppE).